The sequence spans 454 residues: Cysteine--tRNA ligase (454 aa).

C27 contributes to the Zn(2+) binding site. The short motif at 29-39 is the 'HIGH' region element; sequence PTVQDHFHIGH. D207, H232, and E236 together coordinate Zn(2+). The 'KMSKS' region signature appears at 265–269; that stretch reads KMSKS. Residue K268 participates in ATP binding.

The protein belongs to the class-I aminoacyl-tRNA synthetase family. The cofactor is Zn(2+).

The protein resides in the cytoplasm. The catalysed reaction is tRNA(Cys) + L-cysteine + ATP = L-cysteinyl-tRNA(Cys) + AMP + diphosphate. This chain is Cysteine--tRNA ligase, found in Thermoplasma volcanium (strain ATCC 51530 / DSM 4299 / JCM 9571 / NBRC 15438 / GSS1).